The sequence spans 338 residues: Heat-inducible transcription repressor HrcA (338 aa).

It belongs to the HrcA family.

Negative regulator of class I heat shock genes (grpE-dnaK-dnaJ and groELS operons). Prevents heat-shock induction of these operons. The protein is Heat-inducible transcription repressor HrcA of Nitrosomonas europaea (strain ATCC 19718 / CIP 103999 / KCTC 2705 / NBRC 14298).